The sequence spans 424 residues: Probable methyltransferase EP424R (424 aa).

Residues 104–316 (QIVTNAWLKM…TYIVGKNRLR (213 aa)) form the Adrift-type SAM-dependent 2'-O-MTase domain. Residues G136 and D229 each coordinate S-adenosyl-L-methionine. K269 functions as the Proton acceptor in the catalytic mechanism.

Its subcellular location is the virion. This chain is Probable methyltransferase EP424R, found in African swine fever virus (strain Badajoz 1971 Vero-adapted) (Ba71V).